We begin with the raw amino-acid sequence, 362 residues long: MVWPWVAMASRWGPLIGLAPCCLWLLGAVLLMDASARPANHSSTRERVANREENEILPPDHLNGVKLEMDGHLNRGFHQEVFLGKDLGGFDEDAEPRRSRRKLMVIFSKVDVNTDRKISAKEMQRWIMEKTAEHFQEAMEESKTHFRAVDPDGDGHVSWDEYKVKFLASKGHSEKEVADAIRLNEELKVDEETQEVLENLKDRWYQADSPPADLLLTEEEFLSFLHPEHSRGMLRFMVKEIVRDLDQDGDKQLSVPEFISLPVGTVENQQGQDIDDNWVKDRKKEFEELIDSNHDGIVTAEELESYMDPMNEYNALNEAKQMIAVADENQNHHLEPEEVLKYSEFFTGSKLVDYARSVHEEF.

The N-terminal stretch at 1 to 36 is a signal peptide; sequence MVWPWVAMASRWGPLIGLAPCCLWLLGAVLLMDASA. Residue asparagine 40 is glycosylated (N-linked (GlcNAc...) asparagine). EF-hand domains are found at residues 98–133 and 137–172; these read RSRRKLMVIFSKVDVNTDRKISAKEMQRWIMEKTAE and EAMEESKTHFRAVDPDGDGHVSWDEYKVKFLASKGH. The residue at position 99 (serine 99) is a Phosphoserine. Positions 111, 113, 115, 117, 122, 150, 152, 154, 156, and 161 each coordinate Ca(2+). Threonine 193 carries the phosphothreonine modification. EF-hand domains lie at 197–232, 233–268, 278–313, and 314–349; these read LENLKDRWYQADSPPADLLLTEEEFLSFLHPEHSRG, MLRFMVKEIVRDLDQDGDKQLSVPEFISLPVGTVEN, WVKDRKKEFEELIDSNHDGIVTAEELESYMDPMNEY, and NALNEAKQMIAVADENQNHHLEPEEVLKYSEFFTGS. Residue aspartate 213 coordinates Ca(2+). Threonine 217 carries the phosphothreonine modification. 6 residues coordinate Ca(2+): glutamate 220, aspartate 246, aspartate 248, aspartate 250, glutamine 252, and glutamate 257. A Phosphothreonine modification is found at threonine 265. Ca(2+)-binding residues include aspartate 291, asparagine 293, and aspartate 295. Threonine 299 is modified (phosphothreonine). Ca(2+)-binding residues include glutamate 302, aspartate 327, asparagine 329, asparagine 331, histidine 333, and glutamate 338. Residues 309-362 form a necessary for intracellular retention in Golgi apparatus lumen region; it reads PMNEYNALNEAKQMIAVADENQNHHLEPEEVLKYSEFFTGSKLVDYARSVHEEF.

This sequence belongs to the CREC family. Isoform 5 interacts with STXBP1; the interaction is enhanced in presence of calcium. Isoform 5 interacts with STX3. As to expression, ubiquitous. Isoform 5 is expressed in pancreas.

Its subcellular location is the golgi apparatus lumen. It localises to the cytoplasm. The protein resides in the cell membrane. It is found in the cell projection. The protein localises to the bleb. May regulate calcium-dependent activities in the endoplasmic reticulum lumen or post-ER compartment. Functionally, isoform 5 may be involved in the exocytosis of zymogens by pancreatic acini. In Homo sapiens (Human), this protein is 45 kDa calcium-binding protein (SDF4).